The chain runs to 353 residues: Photosystem II protein D1 (353 aa).

Threonine 2 is subject to N-acetylthreonine. Threonine 2 bears the Phosphothreonine mark. 3 consecutive transmembrane segments (helical) span residues 29–46, 118–133, and 142–156; these read YIGW…TATS, HFLL…EWEL, and WIAV…AATA. A chlorophyll a-binding site is contributed by histidine 118. Pheophytin a is bound at residue tyrosine 126. Aspartate 170 and glutamate 189 together coordinate [CaMn4O5] cluster. Residues 197 to 218 form a helical membrane-spanning segment; the sequence is FHMLGVAGVFGGSLFSAMHGSL. Residue histidine 198 coordinates chlorophyll a. A quinone is bound by residues histidine 215 and 264–265; that span reads SF. Histidine 215 is a binding site for Fe cation. Histidine 272 contacts Fe cation. A helical transmembrane segment spans residues 274-288; sequence FLAAWPVVGIWFTAL. 4 residues coordinate [CaMn4O5] cluster: histidine 332, glutamate 333, aspartate 342, and alanine 344. Positions 345 to 353 are excised as a propeptide; sequence AVEAPSTNG.

This sequence belongs to the reaction center PufL/M/PsbA/D family. In terms of assembly, PSII is composed of 1 copy each of membrane proteins PsbA, PsbB, PsbC, PsbD, PsbE, PsbF, PsbH, PsbI, PsbJ, PsbK, PsbL, PsbM, PsbT, PsbX, PsbY, PsbZ, Psb30/Ycf12, at least 3 peripheral proteins of the oxygen-evolving complex and a large number of cofactors. It forms dimeric complexes. The D1/D2 heterodimer binds P680, chlorophylls that are the primary electron donor of PSII, and subsequent electron acceptors. It shares a non-heme iron and each subunit binds pheophytin, quinone, additional chlorophylls, carotenoids and lipids. D1 provides most of the ligands for the Mn4-Ca-O5 cluster of the oxygen-evolving complex (OEC). There is also a Cl(-1) ion associated with D1 and D2, which is required for oxygen evolution. The PSII complex binds additional chlorophylls, carotenoids and specific lipids. is required as a cofactor. Tyr-161 forms a radical intermediate that is referred to as redox-active TyrZ, YZ or Y-Z. Post-translationally, C-terminally processed by CTPA; processing is essential to allow assembly of the oxygen-evolving complex and thus photosynthetic growth.

It is found in the plastid. It localises to the chloroplast thylakoid membrane. It catalyses the reaction 2 a plastoquinone + 4 hnu + 2 H2O = 2 a plastoquinol + O2. Photosystem II (PSII) is a light-driven water:plastoquinone oxidoreductase that uses light energy to abstract electrons from H(2)O, generating O(2) and a proton gradient subsequently used for ATP formation. It consists of a core antenna complex that captures photons, and an electron transfer chain that converts photonic excitation into a charge separation. The D1/D2 (PsbA/PsbD) reaction center heterodimer binds P680, the primary electron donor of PSII as well as several subsequent electron acceptors. The sequence is that of Photosystem II protein D1 from Ceratophyllum demersum (Rigid hornwort).